The primary structure comprises 861 residues: Translation initiation factor IF-2 (861 aa).

The tract at residues 107 to 272 (AQKQQDIQRA…QRKKKSKVVQ (166 aa)) is disordered. The segment covering 115 to 128 (RAAEEAAAKERETE) has biased composition (basic and acidic residues). Polar residues-rich tracts occupy residues 148-158 (SVQQEAANMDT) and 169-180 (VDESVSATTAGG). Positions 210–228 (NKEDSEVRREPADAEDLKR) are enriched in basic and acidic residues. Over residues 260–269 (RARQRKKKSK) the composition is skewed to basic residues. One can recognise a tr-type G domain in the interval 362–531 (SRAPVVSVMG…LLQSEMLELT (170 aa)). Positions 371–378 (GHVDHGKT) are G1. Residue 371–378 (GHVDHGKT) participates in GTP binding. The segment at 396–400 (GITQH) is G2. Residues 417–420 (DTPG) are G3. Residues 417–421 (DTPGH) and 471–474 (NKMD) each bind GTP. Positions 471-474 (NKMD) are G4. The interval 507 to 509 (SAH) is G5.

The protein belongs to the TRAFAC class translation factor GTPase superfamily. Classic translation factor GTPase family. IF-2 subfamily.

Its subcellular location is the cytoplasm. One of the essential components for the initiation of protein synthesis. Protects formylmethionyl-tRNA from spontaneous hydrolysis and promotes its binding to the 30S ribosomal subunits. Also involved in the hydrolysis of GTP during the formation of the 70S ribosomal complex. This is Translation initiation factor IF-2 from Hahella chejuensis (strain KCTC 2396).